Reading from the N-terminus, the 111-residue chain is P antigen family member 2 (111 aa).

The interval 1 to 66 (MSELLRARSQ…NQAVPAFQGP (66 aa)) is disordered. The segment covering 8-24 (RSQSSERGNDQESSQPV) has biased composition (polar residues).

The protein belongs to the GAGE family.

The polypeptide is P antigen family member 2 (PAGE2) (Homo sapiens (Human)).